Consider the following 200-residue polypeptide: Inner membrane-spanning protein YciB (200 aa).

A run of 6 helical transmembrane segments spans residues 7–27, 32–52, 56–76, 93–113, 126–146, and 153–173; these read HPLF…VVNA, FAAT…SYVV, VPLM…LTLV, LFAA…AIMF, ILTF…EIIW, and FWVG…AIAQ.

It belongs to the YciB family.

It is found in the cell inner membrane. In terms of biological role, plays a role in cell envelope biogenesis, maintenance of cell envelope integrity and membrane homeostasis. This chain is Inner membrane-spanning protein YciB, found in Bradyrhizobium sp. (strain BTAi1 / ATCC BAA-1182).